Consider the following 252-residue polypeptide: Ribosomal RNA small subunit methyltransferase J (252 aa).

Residues 101-102, 117-118, 153-154, and Asp171 contribute to the S-adenosyl-L-methionine site; these read RD, ER, and SS.

Belongs to the methyltransferase superfamily. RsmJ family.

It is found in the cytoplasm. It carries out the reaction guanosine(1516) in 16S rRNA + S-adenosyl-L-methionine = N(2)-methylguanosine(1516) in 16S rRNA + S-adenosyl-L-homocysteine + H(+). Its function is as follows. Specifically methylates the guanosine in position 1516 of 16S rRNA. This Salmonella typhimurium (strain LT2 / SGSC1412 / ATCC 700720) protein is Ribosomal RNA small subunit methyltransferase J.